A 1285-amino-acid chain; its full sequence is Protein crumbs homolog 2 (1285 aa).

The first 28 residues, 1–28 (MALARPGTPDPQALASVLLLLLWAPALS), serve as a signal peptide directing secretion. The required for maximum inhibition of APP amyloid-beta peptide secretion stretch occupies residues 1 to 350 (MALARPGTPD…GFQCHCPDGY (350 aa)). One can recognise an EGF-like 1 domain in the interval 67-106 (EPRGCATQPCHHGALCVPQGPDPTGFRCYCVPGFQGPRCE). Intrachain disulfides connect cysteine 71–cysteine 82, cysteine 76–cysteine 94, cysteine 96–cysteine 105, cysteine 112–cysteine 123, cysteine 117–cysteine 132, cysteine 134–cysteine 143, cysteine 150–cysteine 161, cysteine 155–cysteine 170, cysteine 172–cysteine 181, cysteine 188–cysteine 199, cysteine 193–cysteine 208, cysteine 210–cysteine 220, cysteine 227–cysteine 238, cysteine 232–cysteine 247, cysteine 249–cysteine 258, cysteine 265–cysteine 276, cysteine 270–cysteine 306, cysteine 308–cysteine 317, cysteine 324–cysteine 335, cysteine 329–cysteine 344, cysteine 346–cysteine 355, cysteine 362–cysteine 373, cysteine 367–cysteine 382, cysteine 384–cysteine 393, cysteine 400–cysteine 411, cysteine 405–cysteine 424, and cysteine 426–cysteine 435. An EGF-like 2; calcium-binding domain is found at 108-144 (DIDECASRPCHHGATCRNLADRYECHCPLGYAGVTCE). The region spanning 146–182 (EVDECASAPCLHGGSCLDGVGSFRCVCAPGYGGTRCQ) is the EGF-like 3; calcium-binding domain. Residues 184–221 (DLDECQSQPCAHGGTCHDLVNGFRCDCAGTGYEGTHCE) enclose the EGF-like 4; calcium-binding domain. EGF-like domains lie at 223–259 (EVLE…ELCE) and 261–318 (DEDE…ADCG). Asparagine 235 is a glycosylation site (N-linked (GlcNAc...) asparagine). Serine 267 carries O-linked (Glc...) serine glycosylation. The EGF-like 7; calcium-binding domain occupies 320-356 (EVDECASRPCLNGGHCQDLPNGFQCHCPDGYAGPTCE). Positions 358-394 (DVDECLSDPCLHGGTCSDTVAGYICRCPETWGGRDCS) constitute an EGF-like 8; calcium-binding domain. Positions 396 to 436 (QLTGCQGHTCPLAATCIPIFESGVHSYVCHCPPGTHGPFCG) constitute an EGF-like 9 domain. One can recognise a Laminin G-like 1 domain in the interval 431–603 (HGPFCGQNTT…DLGENVLLGC (173 aa)). 2 N-linked (GlcNAc...) asparagine glycosylation sites follow: asparagine 438 and asparagine 478. Cystine bridges form between cysteine 579/cysteine 603, cysteine 609/cysteine 620, cysteine 614/cysteine 629, and cysteine 631/cysteine 640. The region spanning 605-641 (RREQCRPLPCVHGGSCVDLWTHFRCDCARPHRGPTCA) is the EGF-like 10 domain. A Laminin G-like 2 domain is found at 647-805 (ATFGLGGAPS…RQSWNLTAGC (159 aa)). N-linked (GlcNAc...) asparagine glycosylation is found at asparagine 669, asparagine 690, asparagine 786, and asparagine 800. Cystine bridges form between cysteine 766–cysteine 805, cysteine 811–cysteine 822, cysteine 816–cysteine 831, and cysteine 833–cysteine 842. Residues 807-843 (SEDMCSPDPCFNGGTCLVTWNDFHCTCPANFTGPTCA) enclose the EGF-like 11 domain. Asparagine 836, asparagine 886, asparagine 926, and asparagine 1009 each carry an N-linked (GlcNAc...) asparagine glycan. A Laminin G-like 3 domain is found at 871-1054 (EATFREGPPA…PGTPAPILGC (184 aa)). 13 disulfide bridges follow: cysteine 1013/cysteine 1054, cysteine 1060/cysteine 1071, cysteine 1065/cysteine 1080, cysteine 1082/cysteine 1091, cysteine 1098/cysteine 1108, cysteine 1103/cysteine 1118, cysteine 1120/cysteine 1129, cysteine 1138/cysteine 1150, cysteine 1144/cysteine 1159, cysteine 1161/cysteine 1170, cysteine 1177/cysteine 1188, cysteine 1182/cysteine 1197, and cysteine 1199/cysteine 1208. 4 consecutive EGF-like domains span residues 1056–1092 (GAPV…PRCE), 1094–1130 (HVDP…PRCR), 1134–1171 (PSKE…QRCQ), and 1173–1209 (PTLP…QFCE). Asparagine 1141 and asparagine 1158 each carry an N-linked (GlcNAc...) asparagine glycan. Residues 1225–1245 (VAVPAACACLLLLLLGLLSGI) traverse the membrane as a helical segment. The segment at 1249 to 1285 (RKRRQSEGTYSPSQQEVAGARLEMDSVLKVPPEERLI) is interaction with EPB41L5.

This sequence belongs to the Crumbs protein family. In terms of assembly, associates with the gamma-secretase complex via interaction (via the transmembrane domain) with PSEN1/PS1. Interacts (via intracellular domain) with EPB41L5. Interacts with PALS1. Post-translationally, O-glucosylated by POGLUT1 at Ser-267; consists of an O-glucose trisaccharide, in which the O-glucose is elongated by the addition of two xylose residues. O-glucosylation is required for localization at the plasma membrane. N-glycosylated. As to expression, expressed in glomeruli, podocytes of the glomerular capillary loops, and parietal glomerular epithelial cells in the kidney (at protein level). Expressed in retina, fetal eye and brain. Also expressed in kidney, RPE/choroid, and at low levels in lung, placenta, and heart.

It localises to the apical cell membrane. The protein resides in the cytoplasm. It is found in the cell junction. Its subcellular location is the secreted. In terms of biological role, apical polarity protein that plays a central role during the epithelial-to-mesenchymal transition (EMT) at gastrulation, when newly specified mesodermal cells move inside the embryo. Acts by promoting cell ingression, the process by which cells leave the epithelial epiblast and move inside the embryo to form a new tissue layer. The anisotropic distribution of CRB2 and MYH10/myosin-IIB at cell edges define which cells will ingress: cells with high apical CRB2 are probably extruded from the epiblast by neighboring cells with high levels of apical MYH10/myosin-IIB. Plays a role in the maintenance of retinal neuroepithelium organization, structural integrity, adhesion, photoreceptor polarity and retinal photoreceptor layer thickness. May play a role in determining the length of cone photoreceptor outer segments and proliferation of late-born progenitor cells. Also required for maintenance of the apical polarity complex during development of the cortex. Inhibits gamma-secretase-dependent cleavage of APP and secretion of amyloid-beta peptide 40 and amyloid-beta peptide 42, and thereby inhibits gamma-secretase-dependent Notch transcription. This Homo sapiens (Human) protein is Protein crumbs homolog 2.